The following is a 290-amino-acid chain: Fructose-bisphosphate aldolase (290 aa).

Residue S51 coordinates D-glyceraldehyde 3-phosphate. D86 (proton donor) is an active-site residue. The Zn(2+) site is built by H87, D107, E137, and H179. Dihydroxyacetone phosphate is bound at residue G180. H208 contributes to the Zn(2+) binding site. Residues 209-211 (GGS) and 230-233 (NINT) contribute to the dihydroxyacetone phosphate site.

Belongs to the class II fructose-bisphosphate aldolase family. As to quaternary structure, homodimer. Zn(2+) serves as cofactor.

It carries out the reaction beta-D-fructose 1,6-bisphosphate = D-glyceraldehyde 3-phosphate + dihydroxyacetone phosphate. It participates in carbohydrate degradation; glycolysis; D-glyceraldehyde 3-phosphate and glycerone phosphate from D-glucose: step 4/4. Catalyzes the aldol condensation of dihydroxyacetone phosphate (DHAP or glycerone-phosphate) with glyceraldehyde 3-phosphate (G3P) to form fructose 1,6-bisphosphate (FBP) in gluconeogenesis and the reverse reaction in glycolysis. The protein is Fructose-bisphosphate aldolase (fba) of Ureaplasma parvum serovar 3 (strain ATCC 700970).